The primary structure comprises 1358 residues: DNA-directed RNA polymerase subunit beta (1358 aa).

The protein belongs to the RNA polymerase beta chain family. The RNAP catalytic core consists of 2 alpha, 1 beta, 1 beta' and 1 omega subunit. When a sigma factor is associated with the core the holoenzyme is formed, which can initiate transcription.

It catalyses the reaction RNA(n) + a ribonucleoside 5'-triphosphate = RNA(n+1) + diphosphate. Functionally, DNA-dependent RNA polymerase catalyzes the transcription of DNA into RNA using the four ribonucleoside triphosphates as substrates. The chain is DNA-directed RNA polymerase subunit beta from Methylococcus capsulatus (strain ATCC 33009 / NCIMB 11132 / Bath).